The sequence spans 379 residues: GDSL esterase/lipase At3g05180 (379 aa).

An N-terminal signal peptide occupies residues 1-27 (METLFHTLLRLLLFVAISHTLSPLAGS). The active-site Nucleophile is Ser43. Residues Asn294 and Asn330 are each glycosylated (N-linked (GlcNAc...) asparagine). Active-site residues include Asp349 and His352.

The protein belongs to the 'GDSL' lipolytic enzyme family.

It localises to the secreted. The protein is GDSL esterase/lipase At3g05180 of Arabidopsis thaliana (Mouse-ear cress).